Here is a 67-residue protein sequence, read N- to C-terminus: Large ribosomal subunit protein bL35 (67 aa).

Belongs to the bacterial ribosomal protein bL35 family.

This chain is Large ribosomal subunit protein bL35, found in Mesorhizobium japonicum (strain LMG 29417 / CECT 9101 / MAFF 303099) (Mesorhizobium loti (strain MAFF 303099)).